The sequence spans 325 residues: NADH-quinone oxidoreductase subunit H (325 aa).

8 helical membrane-spanning segments follow: residues 11-31 (ILLT…CGAF), 81-101 (VIFT…FAIV), 114-134 (IGIL…LFAG), 154-174 (LSYE…AGSF), 186-206 (VWNV…GVAV), 237-257 (FFVG…TLFF), 265-285 (LPPF…FILI), and 304-324 (ICLP…LWQA).

Belongs to the complex I subunit 1 family. As to quaternary structure, NDH-1 is composed of 13 different subunits. Subunits NuoA, H, J, K, L, M, N constitute the membrane sector of the complex.

The protein localises to the cell inner membrane. The enzyme catalyses a quinone + NADH + 5 H(+)(in) = a quinol + NAD(+) + 4 H(+)(out). In terms of biological role, NDH-1 shuttles electrons from NADH, via FMN and iron-sulfur (Fe-S) centers, to quinones in the respiratory chain. The immediate electron acceptor for the enzyme in this species is believed to be ubiquinone. Couples the redox reaction to proton translocation (for every two electrons transferred, four hydrogen ions are translocated across the cytoplasmic membrane), and thus conserves the redox energy in a proton gradient. This subunit may bind ubiquinone. In Shigella flexneri serotype 5b (strain 8401), this protein is NADH-quinone oxidoreductase subunit H.